A 581-amino-acid chain; its full sequence is Intermediate filament protein ifa-2 (581 aa).

Disordered stretches follow at residues 1–35 and 47–68; these read MTDP…GSGN and SSVS…RDNR. The head stretch occupies residues 1–74; sequence MTDPDSYRSS…RDNREREKKE (74 aa). Residues 7–28 show a composition bias toward polar residues; sequence YRSSITSRPSFNRTVTSSSQNY. The 354-residue stretch at 71-424 folds into the IF rod domain; the sequence is EKKEIMELND…QMLEGNSEGN (354 aa). The coil 1A stretch occupies residues 75–106; sequence IMELNDRLASYIEKVRFLDAQNRKLDADLKML. Residues 107–120 are linker 1; that stretch reads QGRFGKSTGSVKVM. The tract at residues 121–258 is coil 1B; the sequence is YEMEITTATN…RGFETELKEL (138 aa). The segment at 259-276 is linker 12; sequence QAQAARDTTSENREYFKN. The tract at residues 277-424 is coil 2; that stretch reads ELANAMRDIR…QMLEGNSEGN (148 aa). The tract at residues 425–578 is tail; it reads GLRQLVEKVV…THIQRQSQQT (154 aa). Residues 449-469 form a disordered region; that stretch reads RVVKGEHSSRTSYQRSAKGNV. The region spanning 457–574 is the LTD domain; that stretch reads SRTSYQRSAK…EERATHIQRQ (118 aa).

The protein belongs to the intermediate filament family. As to quaternary structure, forms some heteromeric filaments with ifb-1. As to expression, mainly expressed in regions of the hypodermis adjacent to muscle. Expressed in longitudinal stripes where the mechanosensory neurons interface with the hypodermis. Also expressed to the uterine seam and within the uterine-vulval cells.

It localises to the cell junction. The protein localises to the hemidesmosome. In terms of biological role, cytoplasmic intermediate filaments provide mechanical strength to cells. Essential protein, involved in attachment structures in epidermal cells that connect muscles to the external cuticle. Probably acts by forming hypodermal hemidesmosome complexes that help mediate muscle-cuticle force transduction. Although expressed during embryogenesis, it is not required for embryonic development of muscle-cuticle linkages nor for the localization of other proteins to the hemidesmosomes in embryos. The polypeptide is Intermediate filament protein ifa-2 (Caenorhabditis elegans).